Reading from the N-terminus, the 1414-residue chain is DNA-directed RNA polymerase subunit beta' (1414 aa).

Zn(2+)-binding residues include Cys70, Cys72, Cys85, and Cys88. Mg(2+) contacts are provided by Asp460, Asp462, and Asp464. The Zn(2+) site is built by Cys814, Cys888, Cys895, and Cys898. A compositionally biased stretch (low complexity) spans 1392–1403 (EQALSEALKSSA). The disordered stretch occupies residues 1392–1414 (EQALSEALKSSAPQEAKAAQKDE).

The protein belongs to the RNA polymerase beta' chain family. As to quaternary structure, the RNAP catalytic core consists of 2 alpha, 1 beta, 1 beta' and 1 omega subunit. When a sigma factor is associated with the core the holoenzyme is formed, which can initiate transcription. Mg(2+) is required as a cofactor. It depends on Zn(2+) as a cofactor.

It carries out the reaction RNA(n) + a ribonucleoside 5'-triphosphate = RNA(n+1) + diphosphate. In terms of biological role, DNA-dependent RNA polymerase catalyzes the transcription of DNA into RNA using the four ribonucleoside triphosphates as substrates. The chain is DNA-directed RNA polymerase subunit beta' from Coxiella burnetii (strain RSA 331 / Henzerling II).